Consider the following 234-residue polypeptide: Leucyl/phenylalanyl-tRNA--protein transferase (234 aa).

The protein belongs to the L/F-transferase family.

It is found in the cytoplasm. It carries out the reaction N-terminal L-lysyl-[protein] + L-leucyl-tRNA(Leu) = N-terminal L-leucyl-L-lysyl-[protein] + tRNA(Leu) + H(+). It catalyses the reaction N-terminal L-arginyl-[protein] + L-leucyl-tRNA(Leu) = N-terminal L-leucyl-L-arginyl-[protein] + tRNA(Leu) + H(+). The enzyme catalyses L-phenylalanyl-tRNA(Phe) + an N-terminal L-alpha-aminoacyl-[protein] = an N-terminal L-phenylalanyl-L-alpha-aminoacyl-[protein] + tRNA(Phe). In terms of biological role, functions in the N-end rule pathway of protein degradation where it conjugates Leu, Phe and, less efficiently, Met from aminoacyl-tRNAs to the N-termini of proteins containing an N-terminal arginine or lysine. This Syntrophobacter fumaroxidans (strain DSM 10017 / MPOB) protein is Leucyl/phenylalanyl-tRNA--protein transferase.